The chain runs to 60 residues: Large ribosomal subunit protein bL32B (60 aa).

Positions 1-19 (MAVPKRKMSRANTRHRRSQ) are enriched in basic residues. The disordered stretch occupies residues 1–20 (MAVPKRKMSRANTRHRRSQW).

Belongs to the bacterial ribosomal protein bL32 family.

In Saccharopolyspora erythraea (strain ATCC 11635 / DSM 40517 / JCM 4748 / NBRC 13426 / NCIMB 8594 / NRRL 2338), this protein is Large ribosomal subunit protein bL32B.